We begin with the raw amino-acid sequence, 535 residues long: GMP synthase [glutamine-hydrolyzing] (535 aa).

The 207-residue stretch at 4–210 (KILILDFGSQ…VHEICHCKPD (207 aa)) folds into the Glutamine amidotransferase type-1 domain. Catalysis depends on cysteine 85, which acts as the Nucleophile. Active-site residues include histidine 184 and glutamate 186. Residues 211-403 (WVMGDYIAEA…LGLPREMVYR (193 aa)) enclose the GMPS ATP-PPase domain. Residue 238–244 (SGGVDSS) participates in ATP binding.

In terms of assembly, homodimer.

It carries out the reaction XMP + L-glutamine + ATP + H2O = GMP + L-glutamate + AMP + diphosphate + 2 H(+). Its pathway is purine metabolism; GMP biosynthesis; GMP from XMP (L-Gln route): step 1/1. In terms of biological role, catalyzes the synthesis of GMP from XMP. This Polynucleobacter asymbioticus (strain DSM 18221 / CIP 109841 / QLW-P1DMWA-1) (Polynucleobacter necessarius subsp. asymbioticus) protein is GMP synthase [glutamine-hydrolyzing].